Reading from the N-terminus, the 2729-residue chain is 3-methylorcinaldehyde synthase (2729 aa).

Residues Leu-99–Leu-238 are N-terminal acylcarrier protein transacylase domain (SAT). The segment covering Ser-361–Gly-373 has biased composition (polar residues). The segment at Ser-361–His-391 is disordered. Residues Asp-397–Gln-828 enclose the Ketosynthase family 3 (KS3) domain. Active-site for beta-ketoacyl synthase activity residues include Cys-571, His-706, and His-748. The tract at residues Phe-942 to Val-1230 is malonyl-CoA:ACP transacylase (MAT) domain. Residue Ser-1029 is the For acyl/malonyl transferase activity of the active site. The interval Glu-1345–Asp-1479 is N-terminal hotdog fold. The region spanning Glu-1345–Glu-1669 is the PKS/mFAS DH domain. A product template (PT) domain region spans residues Lys-1374–Arg-1665. The active-site Proton acceptor; for dehydratase activity is His-1380. Residues Asp-1513–Glu-1669 are C-terminal hotdog fold. Asp-1575 (proton donor; for dehydratase activity) is an active-site residue. Residues Ala-1682 to Ala-1701 show a composition bias toward low complexity. The segment at Ala-1682–Gly-1726 is disordered. Polar residues predominate over residues Thr-1707–Gly-1716. One can recognise a Carrier domain in the interval Gln-1750–Leu-1824. Position 1784 is an O-(pantetheine 4'-phosphoryl)serine (Ser-1784). A compositionally biased stretch (low complexity) spans Thr-1835 to Ser-1868. The tract at residues Thr-1835–Met-1874 is disordered. The tract at residues Glu-2086–Thr-2254 is methyltransferase (C-MeT) domain. The segment at Ile-2344–Arg-2599 is reductase (R) domain.

The protein operates within secondary metabolite biosynthesis; terpenoid biosynthesis. In terms of biological role, non-reducing polyketide synthase; part of the gene cluster that mediates the biosynthesis of xenovulene A, an unusual meroterpenoid that has potent inhibitory effects on the human gamma-aminobutyrate A (GABAA) benzodiazepine receptor. The first step of xenovulene A biosynthesis is the biosynthesis of 3-methylorcinaldehyde performed by the non-reducing polyketide synthase aspks1. The salicylate hydroxylase asL1 then catalyzes the oxidative dearomatization of 3-methylorcinaldehyde to yield a dearomatized hydroxycyclohexadione. The 2-oxoglutarate-dependent dioxygenase asL3 further catalyzes the oxidative ring expansion to provide the first tropolone metabolite. The cytochrome P450 monooxygenase asR2 allows the synthesis of tropolone hemiacetal. In parallel, a previously unrecognised class of terpene cyclase, asR6, produces alpha-humulene from farnesylpyrophosphate (FPP). The putative Diels-Alderase asR5 probably catalyzes the formation of the tropolone-humulene skeleton by linking humulene and the polyketide moiety. Oxidative-ring contractions catalyzed by asL4 and asL6 then processively remove carbon atoms from the polyketide to yield xenovulene A. This is 3-methylorcinaldehyde synthase from Sarocladium schorii (Acremonium strictum (strain IMI 501407)).